The sequence spans 287 residues: Ferredoxin-type protein NapH (287 aa).

Residues 1-29 (MANRKRDAGREALEKKGWWRSHRWLVLRR) are Cytoplasmic-facing. A helical transmembrane segment spans residues 30–50 (LCQFFVLGMFLSGPWFGVWIL). At 51–79 (HGNYSSSLLFDTVPLTDPLMTLQSLASGH) the chain is on the periplasmic side. The chain crosses the membrane as a helical span at residues 80–100 (LPATVALTGAVIITVLYALAG). Residues 101-139 (KRLFCSWVCPLNPITDLANWLRRRFDLNQSATIPRHIRY) are Cytoplasmic-facing. A helical membrane pass occupies residues 140–160 (VLLVVILVGSALTGTLIWEWI). The Periplasmic portion of the chain corresponds to 161 to 170 (NPVSLMGRSL). The chain crosses the membrane as a helical span at residues 171–191 (VMGFGSGALLILALFLFDLLV). At 192–287 (VEHGWCGHIC…TTRWSSGAKS (96 aa)) the chain is on the cytoplasmic side. 4Fe-4S ferredoxin-type domains follow at residues 217 to 247 (TVAATDRQKCNRCMDCFHVCPEPHVLRAPVL) and 251 to 280 (SPVQVTSRDCMTCGRCVDVCSEDVFTITTR). Residues Cys226, Cys229, Cys232, Cys236, Cys260, Cys263, Cys266, and Cys270 each contribute to the [4Fe-4S] cluster site.

As to quaternary structure, interacts with NapC. It depends on [4Fe-4S] cluster as a cofactor.

It localises to the cell inner membrane. Required for electron transfer from ubiquinol, via NapC, to the periplasmic nitrate reductase NapAB complex. The polypeptide is Ferredoxin-type protein NapH (napH) (Escherichia coli (strain K12)).